We begin with the raw amino-acid sequence, 88 residues long: U-scoloptoxin(XY)-Er1a (88 aa).

The signal sequence occupies residues 1–24 (MASQVVLSFALVVVLAVFVGQVDS). Positions 66–88 (RPELSPGAWDDSSEEKDNEASLA) are disordered. Positions 79–88 (EEKDNEASLA) are excised as a propeptide.

The protein belongs to the scoloptoxin-XY family. Post-translationally, contains 3 disulfide bonds. In terms of tissue distribution, expressed by the venom gland.

It is found in the secreted. In Ethmostigmus rubripes (Giant centipede), this protein is U-scoloptoxin(XY)-Er1a.